A 259-amino-acid chain; its full sequence is MRRVPLIAGNWKMNLDHLQSIAVVQKLAWTLKDAGHDFGAVEVAVFPPFTDLRSVQTLVAADKLPIAFGGQDVSEHDSGAYTGEIAASFLAALEARYVIIGHSERRTLHNETDEQVAAKTAQAVKNGISPIVCVGETAEDLEKHGASAVPVAQLRAALAGIDSAADFVVAYEPVWAIGSGQAATPEQAEQVAAALRAVIAEALGDEVAAKTRILYGGSVKSGNIAGFMRETNVDGALVGGASLDVAEFAAIIRYQKHVI.

Substrate is bound at residue 10 to 12; it reads NWK. Residue His102 is the Electrophile of the active site. Glu172 acts as the Proton acceptor in catalysis. Substrate-binding positions include Gly178, Ser218, and 239–240; that span reads GG.

It belongs to the triosephosphate isomerase family. In terms of assembly, homodimer.

It is found in the cytoplasm. The catalysed reaction is D-glyceraldehyde 3-phosphate = dihydroxyacetone phosphate. Its pathway is carbohydrate biosynthesis; gluconeogenesis. The protein operates within carbohydrate degradation; glycolysis; D-glyceraldehyde 3-phosphate from glycerone phosphate: step 1/1. Involved in the gluconeogenesis. Catalyzes stereospecifically the conversion of dihydroxyacetone phosphate (DHAP) to D-glyceraldehyde-3-phosphate (G3P). The polypeptide is Triosephosphate isomerase (Leifsonia xyli subsp. xyli (strain CTCB07)).